The sequence spans 292 residues: Putative FNIP repeat-containing protein L281 (292 aa).

The stretch at 95-134 (FNKSIDDIPSTITHLSLGAAFNGEVSNIPTSVTHLKLGVS) is one FNIP repeat.

The protein is Putative FNIP repeat-containing protein L281 of Acanthamoeba polyphaga mimivirus (APMV).